The sequence spans 425 residues: Enolase (425 aa).

Residue Q161 coordinates (2R)-2-phosphoglycerate. The active-site Proton donor is E203. D240, E283, and D310 together coordinate Mg(2+). 4 residues coordinate (2R)-2-phosphoglycerate: K335, R364, S365, and K386. The Proton acceptor role is filled by K335.

This sequence belongs to the enolase family. As to quaternary structure, component of the RNA degradosome, a multiprotein complex involved in RNA processing and mRNA degradation. It depends on Mg(2+) as a cofactor.

It is found in the cytoplasm. Its subcellular location is the secreted. The protein resides in the cell surface. It carries out the reaction (2R)-2-phosphoglycerate = phosphoenolpyruvate + H2O. Its pathway is carbohydrate degradation; glycolysis; pyruvate from D-glyceraldehyde 3-phosphate: step 4/5. Catalyzes the reversible conversion of 2-phosphoglycerate (2-PG) into phosphoenolpyruvate (PEP). It is essential for the degradation of carbohydrates via glycolysis. The protein is Enolase of Ruthia magnifica subsp. Calyptogena magnifica.